A 105-amino-acid chain; its full sequence is DNA-directed RNA polymerase subunit Rpo13 (105 aa).

2 stretches are compositionally biased toward basic and acidic residues: residues 1 to 10 and 70 to 80; these read MSEDDSKKEP and FDDVARSYSKA. 2 disordered regions span residues 1–35 and 70–105; these read MSED…GGEF and FDDV…EEEE. The span at 81–97 shows a compositional bias: basic residues; sequence DKKKRRVEKKPKKGKVT.

This sequence belongs to the archaeal Rpo13 RNA polymerase subunit family. Part of the 13-subunit RNA polymerase.

The protein localises to the cytoplasm. It catalyses the reaction RNA(n) + a ribonucleoside 5'-triphosphate = RNA(n+1) + diphosphate. Functionally, DNA-dependent RNA polymerase catalyzes the transcription of DNA into RNA using the four ribonucleoside triphosphates as substrates. In vitro binds dsDNA but not ssDNA. This chain is DNA-directed RNA polymerase subunit Rpo13, found in Sulfolobus acidocaldarius (strain ATCC 33909 / DSM 639 / JCM 8929 / NBRC 15157 / NCIMB 11770).